Reading from the N-terminus, the 784-residue chain is DNA ligase (784 aa).

NAD(+)-binding positions include 31–35 (DAEYD), 80–81 (SL), and E120. Catalysis depends on K122, which acts as the N6-AMP-lysine intermediate. 4 residues coordinate NAD(+): R143, E180, K296, and K320. Residues C414, C417, C444, and C450 each coordinate Zn(2+). In terms of domain architecture, BRCT spans 701 to 784 (AEGLPLAGQT…AFMAEQGITL (84 aa)).

The protein belongs to the NAD-dependent DNA ligase family. LigA subfamily. The cofactor is Mg(2+). Mn(2+) is required as a cofactor.

It catalyses the reaction NAD(+) + (deoxyribonucleotide)n-3'-hydroxyl + 5'-phospho-(deoxyribonucleotide)m = (deoxyribonucleotide)n+m + AMP + beta-nicotinamide D-nucleotide.. Its function is as follows. DNA ligase that catalyzes the formation of phosphodiester linkages between 5'-phosphoryl and 3'-hydroxyl groups in double-stranded DNA using NAD as a coenzyme and as the energy source for the reaction. It is essential for DNA replication and repair of damaged DNA. This Pseudomonas entomophila (strain L48) protein is DNA ligase.